Here is a 325-residue protein sequence, read N- to C-terminus: Hydroxylase/desaturase poxK (325 aa).

Over residues 1–12 (MTATATPVPTVA) the composition is skewed to low complexity. Residues 1-25 (MTATATPVPTVASHAQDITLPPPPK) are disordered.

It belongs to the asaB hydroxylase/desaturase family.

Its pathway is secondary metabolite biosynthesis. In terms of biological role, hydroxylase/desaturase; part of the gene cluster that mediates the biosynthesis of oxaleimides, cytotoxic compounds containing an unusual disubstituted succinimide moiety. The first step of the pathway is provided by the HR-PKS poxF that serves in a new mode of collaborative biosynthesis with the PKS-NRPS poxE, by providing the olefin containing amino acid substrate via the synthesis of an ACP-bound dec-4-enoate. The cytochrome P450 monooxygenase poxM-catalyzed oxidation at the alpha-position creates the enzyme-bound 2-hydroxydec-4-enoyl-ACP thioester, which may be prone to spontaneous hydrolysis to yield 2-hydroxydec-4-enoic acid due to increased electrophilicity of the carbonyl. 2-hydroxydec-4-enoic acid can then be further oxidized by poxM to yield the alpha-ketoacid 2-oxodec-4-enoicacid, which is reductively aminated by the aminotransferase poxL to yield (S,E)-2-aminodec-4-enoic acid. The Hybrid PKS-NRPS synthetase poxE then performs condensation between the octaketide product of its PKS modules and the amino group of (S,E)-2-aminodec-4-enoic acid which is activated and incorporated by the adenylation domain. The resulting aminoacyl product can be cyclized by the Diels-Alderase PoxQ and reductively released by the reductive (R) domain of poxE to yield an aldehyde intermediate. The released aldehyde is then substrate for a Knoevenagel condensation by the hydrolyase poxO followed by an oxidation at the 5-position of the pyrrolidone ring. The presence of the olefin from the amino acid building block allows for migration of the substituted allyl group to occur. This allylic transposition reaction takes place in a conjugate addition, semipinacol-like fashion to yield a succinimide intermediate. Iterative two-electron oxidations of the C7 methyl of the succinimide intermediate to the carboxylic acid can be catalyzed by one of two remaining cytochrome P450 monooxygenasess poxC or poxD to yield oxaleimide A. Subsequent oxidation yields the maleimide scaffold oxaleimide I. Both oxaleimide A and oxaleimide I can undergo oxidative modifications in the decalin ring to yield the series of products oxaleimides B to H. This is Hydroxylase/desaturase poxK from Penicillium oxalicum.